The sequence spans 269 residues: SF-assemblin (269 aa).

Residues 1–23 (MSISPGRSFSPMRASGLTGITSA) are disordered. The interval 1-24 (MSISPGRSFSPMRASGLTGITSAG) is nonhelical region. The segment at 25 to 269 (PTAKLEHVSE…LQEGLKLVST (245 aa)) is rod. A coiled-coil region spans residues 98–144 (AERSAAQHVDMQNSLKQAVDSLSNRLQDLHSLVREEREQRRNDIEHL).

It belongs to the SF-assemblin family.

It localises to the cytoplasm. The protein localises to the cytoskeleton. In terms of biological role, major component of the striated microtubule-associated fibers (SMAFs; system-I-fibers). The protein is SF-assemblin of Chlamydomonas moewusii (Chlamydomonas eugametos).